We begin with the raw amino-acid sequence, 430 residues long: Mitochondrial distribution and morphology protein 12 (430 aa).

The SMP-LTD domain maps to 1-430 (MSIDIDWERA…VYPSFWTFLI (430 aa)). Disordered stretches follow at residues 61-117 (DLSD…YESN), 177-276 (TPLG…RMRE), and 352-377 (MGPETAGGGGGGDTSEPNSSRRKPSS). Residues 69–82 (FYEDDDENFSDSSE) are compositionally biased toward acidic residues. Over residues 85–96 (SPTREPVDRYGN) the composition is skewed to basic and acidic residues. Polar residues-rich tracts occupy residues 211–233 (SAQSRPSTANTGNTLPSRDSMSI) and 241–251 (ASQGMPNNQGQ). The span at 265 to 276 (PLDDTPPRRMRE) shows a compositional bias: basic and acidic residues.

The protein belongs to the MDM12 family. Component of the ER-mitochondria encounter structure (ERMES) or MDM complex, composed of MMM1, MDM10, MDM12 and MDM34. An MMM1 homodimer associates with one molecule of MDM12 on each side in a pairwise head-to-tail manner, and the SMP-LTD domains of MMM1 and MDM12 generate a continuous hydrophobic tunnel for phospholipid trafficking.

The protein localises to the mitochondrion outer membrane. It is found in the endoplasmic reticulum membrane. Component of the ERMES/MDM complex, which serves as a molecular tether to connect the endoplasmic reticulum (ER) and mitochondria. Components of this complex are involved in the control of mitochondrial shape and protein biogenesis, and function in nonvesicular lipid trafficking between the ER and mitochondria. MDM12 is required for the interaction of the ER-resident membrane protein MMM1 and the outer mitochondrial membrane-resident beta-barrel protein MDM10. The MDM12-MMM1 subcomplex functions in the major beta-barrel assembly pathway that is responsible for biogenesis of all mitochondrial outer membrane beta-barrel proteins, and acts in a late step after the SAM complex. The MDM10-MDM12-MMM1 subcomplex further acts in the TOM40-specific pathway after the action of the MDM12-MMM1 complex. Essential for establishing and maintaining the structure of mitochondria and maintenance of mtDNA nucleoids. In Ajellomyces capsulatus (strain G186AR / H82 / ATCC MYA-2454 / RMSCC 2432) (Darling's disease fungus), this protein is Mitochondrial distribution and morphology protein 12.